We begin with the raw amino-acid sequence, 443 residues long: Probable D-serine dehydratase (443 aa).

K118 is subject to N6-(pyridoxal phosphate)lysine.

The protein belongs to the serine/threonine dehydratase family. DsdA subfamily. It depends on pyridoxal 5'-phosphate as a cofactor.

The catalysed reaction is D-serine = pyruvate + NH4(+). This chain is Probable D-serine dehydratase, found in Aeromonas salmonicida (strain A449).